The chain runs to 1095 residues: Voltage-gated inwardly rectifying potassium channel KCNH3 (1095 aa).

Topologically, residues 1–228 (MPAMRGLLAP…HCGALRATWD (228 aa)) are cytoplasmic. In terms of domain architecture, PAS spans 18–90 (IATRFDGTHS…QQIRKALDEH (73 aa)). The 53-residue stretch at 93-145 (FKAELILYRKSGLPFWCLLDVIPIKNEKGEVALFLVSHKDISETKNRGGPDNW) folds into the PAC domain. Residues 137 to 150 (KNRGGPDNWKERGG) show a composition bias toward basic and acidic residues. The tract at residues 137–161 (KNRGGPDNWKERGGGRRRYGRAGSK) is disordered. Residues 229 to 249 (GFILLATLYVAVTVPYSVCVS) traverse the membrane as a helical segment. Over 250–259 (TAREPSAARG) the chain is Extracellular. The helical transmembrane segment at 260–280 (PPSVCDLAVEVLFILDIVLNF) threads the bilayer. At 281-302 (RTTFVSKSGQVVFAPKSICLHY) the chain is on the cytoplasmic side. Residues 303–323 (VTTWFLLDVIAALPFDLLHAF) traverse the membrane as a helical segment. The Extracellular segment spans residues 324–331 (KVNVYVGA). The helical; Voltage-sensor transmembrane segment at 332-352 (HLLKTVRLLRLLRLLPRLDRY) threads the bilayer. The Cytoplasmic portion of the chain corresponds to 353–361 (SQYSAVVLT). The helical transmembrane segment at 362–382 (LLMAVFALLAHWVACVWFYIG) threads the bilayer. The Extracellular portion of the chain corresponds to 383 to 464 (QQEIESSESE…GGPSLRSAYI (82 aa)). Residues 417–447 (PDGGNSSGQSENCSSSSSSSGSGGGRGSEAN) are disordered. Residues 419 to 436 (GGNSSGQSENCSSSSSSS) are compositionally biased toward low complexity. 3 N-linked (GlcNAc...) asparagine glycosylation sites follow: Asn-421, Asn-428, and Asn-447. The pore-forming intramembrane region spans 465-485 (TSLYFALSSLTSVGFGNVSAN). The Selectivity filter motif lies at 476 to 481 (SVGFGN). At 486–490 (TDTEK) the chain is on the extracellular side. The chain crosses the membrane as a helical span at residues 491 to 511 (IFSICTMLIGALMHAVVFGNV). The Cytoplasmic portion of the chain corresponds to 512 to 1095 (TAIIQRMYAR…QWTQEEGTGV (584 aa)). Position 593–708 (593–708 (LFEAASRGCL…FAPRFSRGLR (116 aa))) interacts with a nucleoside 3',5'-cyclic phosphate. Disordered regions lie at residues 740–823 (EEKE…LPPM), 854–883 (VGQS…PSEA), and 965–1069 (GSVL…PWDP). Residues 784 to 796 (TAPRPRLGGRGRP) are compositionally biased toward basic residues. Residues 857 to 872 (SGPECSSSPSPGTESG) are compositionally biased toward low complexity. Positions 974–991 (HPRPGQPPPLMAPWPWGP) are enriched in pro residues.

It belongs to the potassium channel family. H (Eag) (TC 1.A.1.20) subfamily. Kv12.2/KCNH3 sub-subfamily. The potassium channel is probably composed of a homo- or heterotetrameric complex of pore-forming alpha subunits that can associate with modulating beta subunits. Interacts with KCNE1 and KCNE3; these interactions regulate KCNH3 trafficking to the plasma membrane and its subsequent voltage-gated potassium channel activity. N-glycosylated. N-glycosylation mediates traffick to the cell membrane but is not necessary for voltage-gated potassium channel activity. Detected in brain, but not in other tissues.

It localises to the cell membrane. The enzyme catalyses K(+)(in) = K(+)(out). Functionally, pore-forming (alpha) subunit of a voltage-gated inwardly rectifying potassium channel. Charactherized by a fast rate of activation during depolarization followed by a rapid inactivation at much more depolarized value causing inward rectification due to a C-type inactivation mechanism. Exhibits a rapid recovery from inactivation. This chain is Voltage-gated inwardly rectifying potassium channel KCNH3, found in Mus musculus (Mouse).